The chain runs to 293 residues: Short-chain dehydrogenase/reductase PhomF' (293 aa).

Residues Ile31 and Asn102 each coordinate NADP(+). Ser175 serves as the catalytic Proton donor. NADP(+)-binding residues include Tyr190, Lys194, and Ser225. Tyr190 (proton acceptor) is an active-site residue. Lys194 (lowers pKa of active site Tyr) is an active-site residue.

This sequence belongs to the short-chain dehydrogenases/reductases (SDR) family.

Short-chain dehydrogenase/reductase; part of the gene cluster that mediates the biosynthesis of the phomopsins, a group of hexapeptide mycotoxins which infects lupins and causes lupinosis disease in livestock. The role of phomF' within the phomopsins biosynthesis pathway has still to be determined. The pathway starts with the processing of the precursor phomA by several endopeptidases including kexin proteases as well as the cluster-specific S41 family peptidase phomP1 and the oligopeptidase phomG to produce 10 identical copies of the hexapeptide Tyr-Val-Ile-Pro-Ile-Asp. After being excised from the precursor peptide, the core peptides are cyclized and modified post-translationally by enzymes encoded within the gene cluster. The timing and order of proteolysis of the phomA precursor and PTMs are still unknown. Two tyrosinase-like enzymes, phomQ1 and phomQ2, catalyze the chlorination and hydroxylation of Tyr, respectively. PhomYb, is proposed to be involved in the construction of the macrocyclic structure. The other 4 ustYa family proteins may be involved in PTMs that generate the unique structure of phomopsin A. PhomYa is required for the hydroxylation of C-beta of Tyr. PhomYc, phomYd, and phomYe are responsible for the biosynthesis of 2,3-dehydroisoleucine (dIle), 2,3-dehydroaspartic acid (dAsp), and 3,4-dehydroproline (dPro), respectively. While dIle formation by phomYc is indispensable for the installation of dAsp by phomYd, the order of the other PTMs have not been elucidated yet. Most of the biosynthetic enzymes likely have broad substrate specificity, and thus, there might be a metabolic grid from a precursor to phomopsin A. The enzyme(s) responsible for the biosynthesis of 3,4-dehydrovaline (dVal) have also not been identified yet. Finally, phomM acts as an S-adenosylmethionine-dependent alpha-N-methyltransferase that catalyzes two successive N-methylation reactions, converting N-desmethyl-phomopsin A to phomopsin A and phomopsin A further to an N,N-dimethylated congener called phomopsin E. The polypeptide is Short-chain dehydrogenase/reductase PhomF' (Diaporthe leptostromiformis (Lupinosis disease fungus)).